Reading from the N-terminus, the 308-residue chain is HTH-type transcriptional regulator SsuR (308 aa).

Positions 1–59 (MNFQQLRFVREAVRQNMNLTEVANVLYTSQSGVSKQIKDLEDELGVDIFIRRGKRLTGL) constitute an HTH lysR-type domain. The segment at residues 19–38 (LTEVANVLYTSQSGVSKQIK) is a DNA-binding region (H-T-H motif).

This sequence belongs to the LysR transcriptional regulatory family.

Transcriptional regulator that is essential for the utilization of a number of organic sulfur sources of either environmental or human origin. Required for aliphatic sulfonate utilization. Binds to DNA at target promoter regions. Targets include the ssuDBC operon, the tauABC operon, three tauD-type genes and atsA. In Burkholderia cenocepacia (strain ATCC BAA-245 / DSM 16553 / LMG 16656 / NCTC 13227 / J2315 / CF5610) (Burkholderia cepacia (strain J2315)), this protein is HTH-type transcriptional regulator SsuR.